The sequence spans 647 residues: Threonine--tRNA ligase (647 aa).

The TGS domain maps to 1-61 (MIKITFPDGA…TEDGAIEIVT (61 aa)). Residues 242–540 (DHRKLGKELD…LIENYKGAFP (299 aa)) form a catalytic region. Zn(2+) is bound by residues Cys-336, His-387, and His-517.

Belongs to the class-II aminoacyl-tRNA synthetase family. In terms of assembly, homodimer. It depends on Zn(2+) as a cofactor.

The protein resides in the cytoplasm. The catalysed reaction is tRNA(Thr) + L-threonine + ATP = L-threonyl-tRNA(Thr) + AMP + diphosphate + H(+). In terms of biological role, catalyzes the attachment of threonine to tRNA(Thr) in a two-step reaction: L-threonine is first activated by ATP to form Thr-AMP and then transferred to the acceptor end of tRNA(Thr). Also edits incorrectly charged L-seryl-tRNA(Thr). The chain is Threonine--tRNA ligase from Streptococcus sanguinis (strain SK36).